A 180-amino-acid chain; its full sequence is Large ribosomal subunit protein uL5c (180 aa).

The protein belongs to the universal ribosomal protein uL5 family. As to quaternary structure, part of the 50S ribosomal subunit; contacts the 5S rRNA.

It is found in the plastid. It localises to the chloroplast. In terms of biological role, binds 5S rRNA, forms part of the central protuberance of the 50S subunit. The sequence is that of Large ribosomal subunit protein uL5c (rpl5) from Tupiella akineta (Green alga).